Here is a 575-residue protein sequence, read N- to C-terminus: Transcription factor collier (575 aa).

The interaction with DNA stretch occupies residues 79–82; it reads RKSN. The segment at 167–186 adopts a C5-type zinc-finger fold; it reads CRVLLTHEVMCSRCCDKKSC. 2 interaction with DNA regions span residues 213-220 and 252-255; these read NCLKNAGN and NNSK. The tract at residues 255-278 is disordered; that stretch reads KHGRRAKRLDTTEGTGNTSLSISG. Over residues 266–276 the composition is skewed to polar residues; the sequence is TEGTGNTSLSI. In terms of domain architecture, IPT/TIG spans 299 to 382; sequence PCIKAISPSE…KGSPGRFVYV (84 aa). Disordered stretches follow at residues 456 to 492 and 546 to 575; these read GQWTEDDYQRAQSSSVSPRGGYCSSASTPHSSGGSYG and AATAHPHHHYPHPHQPWHNPAVSAATAAAV. Residues 479–492 are compositionally biased toward low complexity; it reads SSASTPHSSGGSYG. Residues 546 to 557 show a composition bias toward basic residues; the sequence is AATAHPHHHYPH. Residues 561–575 show a composition bias toward low complexity; sequence PWHNPAVSAATAAAV.

The protein belongs to the COE family. Its expression at the blastoderm stage is restricted to a single stripe of cells corresponding to part of the intercalary and mandibular segment primordia, possibly parasegment O.

Its subcellular location is the nucleus. May act as a 'second-level regulator' of head patterning. Required for establishment of the PS(-1)/PS0 parasegmental border and formation of the intercalary segment. Required for expression of the segment polarity genes hedgehog, engrailed and wingless, and the segment-identity genes CAP and collar in the intercalary segment. Required at the onset of the gastrulation for the correct formation of the mandibular segment. This Drosophila melanogaster (Fruit fly) protein is Transcription factor collier (kn).